A 349-amino-acid polypeptide reads, in one-letter code: MALPDFSMRQLLEAGAHFGHQSHRWNPKMQPFIFGTRNNIHIIDLAQTVPALYQALQAVSDTVAKGGRVLFVGTKRQAADVVADSARRSAQYFVNSRWLGGTLTNWKTISGSIQRLRKVDEVLAGGGQGLTKKERLMLSREKDKLEKALGGIKDMGGVPDLLFVIDTNKEQLAIKEAKRLGIPVAAIVDTNCDPDGITYVVPANDDAGRAIALYCDLIARAAIDGISRGQGALGLDIGASEEPVAEELPANLNEPEVAQVDISEPYVGEPFELLAAPRGAPDDLTKLTGVGPQLVQKLNDAGIYHYWQIAAMAPEDVAKVDAELKLNGRIARDGWINQARAFVEAAAAA.

It belongs to the universal ribosomal protein uS2 family.

The sequence is that of Small ribosomal subunit protein uS2 from Methylobacterium sp. (strain 4-46).